We begin with the raw amino-acid sequence, 114 residues long: MATLFDQAKLMARELQDSDEFKQLSTALAKVRADQEANSAFHDFQVAQKEIQELQSKGEEPKPEQIQRWQTTAQKAQQLKPIKDLSVVEQNLNNMLGEVNEIITAPLNELYLNN.

This sequence belongs to the UPF0342 family.

In Oenococcus oeni (strain ATCC BAA-331 / PSU-1), this protein is UPF0342 protein OEOE_0901.